A 151-amino-acid polypeptide reads, in one-letter code: Ubiquitin-conjugating enzyme E2 2 (151 aa).

The region spanning 4 to 150 (AARRRLMRDF…VRETVEKSWE (147 aa)) is the UBC core domain. Cys-88 acts as the Glycyl thioester intermediate in catalysis.

It belongs to the ubiquitin-conjugating enzyme family.

The protein localises to the cytoplasm. It is found in the nucleus. The enzyme catalyses S-ubiquitinyl-[E1 ubiquitin-activating enzyme]-L-cysteine + [E2 ubiquitin-conjugating enzyme]-L-cysteine = [E1 ubiquitin-activating enzyme]-L-cysteine + S-ubiquitinyl-[E2 ubiquitin-conjugating enzyme]-L-cysteine.. It functions in the pathway protein modification; protein ubiquitination. Functionally, catalyzes the covalent attachment of ubiquitin to other proteins. Plays a role in transcription regulation by catalyzing the monoubiquitination of histone H2B to form H2BK123ub1. H2BK123ub1 gives a specific tag for epigenetic transcriptional activation and is also a prerequisite for H3K4me and H3K79me formation. Also involved in postreplication repair of UV-damaged DNA, in N-end rule-dependent protein degradation and in sporulation. This is Ubiquitin-conjugating enzyme E2 2 (UBC2) from Fusarium solani (Filamentous fungus).